Here is a 371-residue protein sequence, read N- to C-terminus: tRNA-specific 2-thiouridylase MnmA (371 aa).

Residues 14–21 and methionine 40 each bind ATP; that span reads GMSGGVDS. The interval 100-102 is interaction with target base in tRNA; that stretch reads NPD. Cysteine 105 functions as the Nucleophile in the catalytic mechanism. The cysteines at positions 105 and 201 are disulfide-linked. Glycine 129 serves as a coordination point for ATP. Residues 151 to 153 form an interaction with tRNA region; the sequence is KDQ. Cysteine 201 acts as the Cysteine persulfide intermediate in catalysis. The tract at residues 309–310 is interaction with tRNA; that stretch reads RY.

The protein belongs to the MnmA/TRMU family.

Its subcellular location is the cytoplasm. It catalyses the reaction S-sulfanyl-L-cysteinyl-[protein] + uridine(34) in tRNA + AH2 + ATP = 2-thiouridine(34) in tRNA + L-cysteinyl-[protein] + A + AMP + diphosphate + H(+). Functionally, catalyzes the 2-thiolation of uridine at the wobble position (U34) of tRNA, leading to the formation of s(2)U34. This chain is tRNA-specific 2-thiouridylase MnmA, found in Halalkalibacterium halodurans (strain ATCC BAA-125 / DSM 18197 / FERM 7344 / JCM 9153 / C-125) (Bacillus halodurans).